The chain runs to 749 residues: cGMP-dependent protein kinase egl-4 (749 aa).

Positions 30-96 (EAHELQKLIP…LEQKAQSAAS (67 aa)) form a coiled coil. Residues 87-111 (LEQKAQSAASPGQPPSPSPRTDQLG) form a disordered region. 3',5'-cyclic GMP-binding positions include 234–237 (GELA), 244–245 (RT), R349, 358–361 (GERA), 368–369 (RT), and Y403. The Protein kinase domain occupies 438–698 (VKRLATLGVG…VNDIRKHRWF (261 aa)). Residues 444-452 (LGVGGFGRV) and K468 each bind ATP. A Nuclear localization signal motif is present at residues 461–473 (KSKTYALKALKKK). The active-site Proton acceptor is the D562. In terms of domain architecture, AGC-kinase C-terminal spans 699–749 (MGFDWEGLRTKTLKPPILPKVNNPADVTNFDNYPPDNDVPPDEFSGWDEGF). A disordered region spans residues 723–749 (ADVTNFDNYPPDNDVPPDEFSGWDEGF).

This sequence belongs to the protein kinase superfamily. AGC Ser/Thr protein kinase family. cGMP subfamily. The cofactor is Mg(2+). Autophosphorylated.

It localises to the cytoplasm. The protein localises to the nucleus. The enzyme catalyses L-seryl-[protein] + ATP = O-phospho-L-seryl-[protein] + ADP + H(+). It catalyses the reaction L-threonyl-[protein] + ATP = O-phospho-L-threonyl-[protein] + ADP + H(+). Binding of cGMP results in enzyme activation. In terms of biological role, promotes chemoreceptor gene expression in response to increased cGMP levels by antagonizing the gene repression functions of the class II HDAC hda-4 and the mef-2 transcription factor. Regulates gene expression via recruitment of a histone deacetylase complex containing hda-2, saeg-1 and saeg-2. Represses body size and lifespan through the dbl-1 and insulin pathways, respectively. May also signal through daf-3 and/or daf-5. Role in egg-laying, dauer formation and motility. Regulates behavioral responses to various chemosensory stimuli in sensory neurons. Required for the initiation of long term adaptation to prolonged odor exposure which results in a decrease in odor seeking behavior. May regulate this process by phosphorylating tax-2, a subunit of cyclic nucleotide-gated channel tax-2/tax-4. In ASH sensory neurons, negatively regulates avoidance behavior to some bitter tastants, such as quinine, probably by phosphorylating rgs-2 and rgs-3 which are 2 regulator of G-protein signaling proteins. In AWB sensory neurons, involved in avoidance behavior to some repellent odors. In ASE left (ASEL) sensory neuron, involved in the sensing of environmental alkalinity downstream of receptor-type guanylate cyclase gcy-14. In sensory neurons, involved in the signaling pathway downstream of insulin, TGF-beta and receptor-type guanylate cyclase responsible for inducing quiescence after food intake. Might play a role in aversive olfactory learning in AWC neurons when an odor is associated with food deprivation, depending on the ins-1/age-1 signal from the AIA to the AWC neurons. Probably by regulating neuronal transmission downstream of lin-3 and receptor lin-23 and phospholipase plc-3 in ALA neurons, involved in the decrease in locomotion during the quiescent state that precedes each larval molt. This Caenorhabditis briggsae protein is cGMP-dependent protein kinase egl-4.